The sequence spans 289 residues: tRNA pseudouridine synthase B (289 aa).

The active-site Nucleophile is the D38.

This sequence belongs to the pseudouridine synthase TruB family. Type 1 subfamily.

The enzyme catalyses uridine(55) in tRNA = pseudouridine(55) in tRNA. Responsible for synthesis of pseudouridine from uracil-55 in the psi GC loop of transfer RNAs. This is tRNA pseudouridine synthase B from Clostridium acetobutylicum (strain ATCC 824 / DSM 792 / JCM 1419 / IAM 19013 / LMG 5710 / NBRC 13948 / NRRL B-527 / VKM B-1787 / 2291 / W).